The sequence spans 236 residues: (5-formylfuran-3-yl)methyl phosphate synthase (236 aa).

The active-site Schiff-base intermediate with substrate is the Lys27. Lys85 serves as the catalytic Proton acceptor.

This sequence belongs to the MfnB family.

It catalyses the reaction 2 D-glyceraldehyde 3-phosphate = 4-(hydroxymethyl)-2-furancarboxaldehyde phosphate + phosphate + 2 H2O. The protein operates within cofactor biosynthesis; methanofuran biosynthesis. In terms of biological role, catalyzes the formation of 4-(hydroxymethyl)-2-furancarboxaldehyde phosphate (4-HFC-P) from two molecules of glyceraldehyde-3-P (GA-3-P). This chain is (5-formylfuran-3-yl)methyl phosphate synthase, found in Methanothermobacter thermautotrophicus (strain ATCC 29096 / DSM 1053 / JCM 10044 / NBRC 100330 / Delta H) (Methanobacterium thermoautotrophicum).